A 120-amino-acid polypeptide reads, in one-letter code: MAVCIIDHDNIRGVIYFEPVHGKDKVLGSVIGLKSGTYSLIIHRYGDISRGCDSIGSPEIFIGNIFVNRYGVAYVYLDTDVNISTIIGKALSISKNDQRLACGVIGISYINEKNNTFSYN.

The cysteines at positions 52 and 102 are disulfide-linked.

The protein belongs to the Cu-Zn superoxide dismutase family.

The protein localises to the virion. Its subcellular location is the host cytoplasm. In terms of biological role, superoxide dismutase-like protein with no enzymatic activity. The chain is Cu-Zn superoxide dismutase-like protein OPG175 (OPG175) from Vaccinia virus (strain Tashkent) (VACV).